Here is a 379-residue protein sequence, read N- to C-terminus: Chaperone protein DnaJ (379 aa).

The 66-residue stretch at 5–70 (DYYEILGVPK…QKRAAYDQYG (66 aa)) folds into the J domain. The segment at 134–212 (GVTKEIRIPT…CHGHGRIEKT (79 aa)) adopts a CR-type zinc-finger fold. Positions 147, 150, 164, 167, 186, 189, 200, and 203 each coordinate Zn(2+). CXXCXGXG motif repeat units lie at residues 147–154 (CEVCHGSG), 164–171 (CPTCHGAG), 186–193 (CPHCQGRG), and 200–207 (CNSCHGHG).

This sequence belongs to the DnaJ family. In terms of assembly, homodimer. Requires Zn(2+) as cofactor.

It is found in the cytoplasm. Its function is as follows. Participates actively in the response to hyperosmotic and heat shock by preventing the aggregation of stress-denatured proteins and by disaggregating proteins, also in an autonomous, DnaK-independent fashion. Unfolded proteins bind initially to DnaJ; upon interaction with the DnaJ-bound protein, DnaK hydrolyzes its bound ATP, resulting in the formation of a stable complex. GrpE releases ADP from DnaK; ATP binding to DnaK triggers the release of the substrate protein, thus completing the reaction cycle. Several rounds of ATP-dependent interactions between DnaJ, DnaK and GrpE are required for fully efficient folding. Also involved, together with DnaK and GrpE, in the DNA replication of plasmids through activation of initiation proteins. The chain is Chaperone protein DnaJ from Cronobacter sakazakii (strain ATCC BAA-894) (Enterobacter sakazakii).